The following is a 128-amino-acid chain: Glycophorin-C (128 aa).

Over residues 1–12 (MWSTRSPNSTAW) the composition is skewed to polar residues. Residues 1 to 48 (MWSTRSPNSTAWPLSLEPDPGMASASTTMHTTTIAEPDPGMSGWPDGR) are disordered. The Extracellular segment spans residues 1–57 (MWSTRSPNSTAWPLSLEPDPGMASASTTMHTTTIAEPDPGMSGWPDGRMETSTPTIM). An O-linked (GalNAc...) serine glycan is attached at Ser-3. O-linked (GalNAc...) threonine glycosylation is present at Thr-4. A glycan (O-linked (GalNAc...) serine) is linked at Ser-6. A glycan (N-linked (GlcNAc...) asparagine) is linked at Asn-8. Ser-9 carries O-linked (GalNAc...) serine glycosylation. O-linked (GalNAc...) threonine glycosylation is present at Thr-10. Residues Ser-15, Ser-24, and Ser-26 are each glycosylated (O-linked (GalNAc...) serine). Residues 22–33 (MASASTTMHTTT) are compositionally biased toward low complexity. 5 O-linked (GalNAc...) threonine glycosylation sites follow: Thr-27, Thr-28, Thr-31, Thr-32, and Thr-33. Ser-42 carries O-linked (GalNAc...) serine glycosylation. A helical; Signal-anchor for type III membrane protein transmembrane segment spans residues 58–81 (DIVVIAGVIAAVAIVLVSLLFVML). Topologically, residues 82–128 (RYMYRHKGTYHTNEAKGTEFAESADAALQGDPALQDAGDSSRKEYFI) are cytoplasmic. Ser-104 and Ser-122 each carry phosphoserine. The segment at 108-128 (ALQGDPALQDAGDSSRKEYFI) is disordered.

Belongs to the glycophorin-C family. O-glycosylated with core 1 or possibly core 8 glycans. Glycophorin-C is expressed in erythrocytes. Glycophorin-D and IsoGPC are ubiquitously expressed.

The protein localises to the cell membrane. Functionally, this protein is a minor sialoglycoprotein in human erythrocyte membranes. The blood group Gerbich antigens and receptors for Plasmodium falciparum merozoites are most likely located within the extracellular domain. Glycophorin-C plays an important role in regulating the stability of red cells. The polypeptide is Glycophorin-C (GYPC) (Homo sapiens (Human)).